The sequence spans 156 residues: MKLQLIAVGTKMPDWVTRGFEEYQRRFPRDMALELIEIPAGKRGKNADIARILQKEGDLMLAAVAKGNHIVSLDLPGKNWTTPELAEQLSKWQLDGRDVSLLIGGPEGLSPACKEAASQSWCLSALTLPHPLVRVLVAESLYRAWSINNNHPYHRE.

Residues Leu73, Gly104, and 123 to 128 contribute to the S-adenosyl-L-methionine site; that span reads LSALTL.

Belongs to the RNA methyltransferase RlmH family. In terms of assembly, homodimer.

Its subcellular location is the cytoplasm. It catalyses the reaction pseudouridine(1915) in 23S rRNA + S-adenosyl-L-methionine = N(3)-methylpseudouridine(1915) in 23S rRNA + S-adenosyl-L-homocysteine + H(+). Its function is as follows. Specifically methylates the pseudouridine at position 1915 (m3Psi1915) in 23S rRNA. The chain is Ribosomal RNA large subunit methyltransferase H from Shewanella denitrificans (strain OS217 / ATCC BAA-1090 / DSM 15013).